Reading from the N-terminus, the 534-residue chain is Probable bifunctional tRNA threonylcarbamoyladenosine biosynthesis protein (534 aa).

Residues 1 to 324 (MICLGIEGTA…YRTDQVEVTW (324 aa)) form a kae1 region. Residues His-108, His-112, and Tyr-129 each coordinate Fe cation. Residues 129–133 (YTSGG), Asp-161, Gly-174, Glu-178, and Asn-258 each bind L-threonylcarbamoyladenylate. Position 286 (Asp-286) interacts with Fe cation. A Protein kinase domain is found at 335–534 (LPDNIKEKGA…DEIEKRGRYL (200 aa)). Residues 340-348 (KEKGAEADI) and Lys-361 each bind ATP. Asp-455 acts as the Proton acceptor; for kinase activity in catalysis.

This sequence in the N-terminal section; belongs to the KAE1 / TsaD family. In the C-terminal section; belongs to the protein kinase superfamily. Tyr protein kinase family. BUD32 subfamily. As to quaternary structure, component of the KEOPS complex that consists of Kae1, Bud32, Cgi121 and Pcc1; the whole complex dimerizes. Fe(2+) serves as cofactor.

The protein localises to the cytoplasm. The enzyme catalyses L-seryl-[protein] + ATP = O-phospho-L-seryl-[protein] + ADP + H(+). It carries out the reaction L-threonyl-[protein] + ATP = O-phospho-L-threonyl-[protein] + ADP + H(+). The catalysed reaction is L-threonylcarbamoyladenylate + adenosine(37) in tRNA = N(6)-L-threonylcarbamoyladenosine(37) in tRNA + AMP + H(+). Its function is as follows. Required for the formation of a threonylcarbamoyl group on adenosine at position 37 (t(6)A37) in tRNAs that read codons beginning with adenine. Is a component of the KEOPS complex that is probably involved in the transfer of the threonylcarbamoyl moiety of threonylcarbamoyl-AMP (TC-AMP) to the N6 group of A37. The Kae1 domain likely plays a direct catalytic role in this reaction. The Bud32 domain probably displays kinase activity that regulates Kae1 function. This is Probable bifunctional tRNA threonylcarbamoyladenosine biosynthesis protein from Methanosphaera stadtmanae (strain ATCC 43021 / DSM 3091 / JCM 11832 / MCB-3).